We begin with the raw amino-acid sequence, 87 residues long: Large ribosomal subunit protein bL27 (87 aa).

Residues 1-22 form a disordered region; that stretch reads MAHKKGQGSVKNGRDSRSKRLG.

The protein belongs to the bacterial ribosomal protein bL27 family.

This chain is Large ribosomal subunit protein bL27, found in Akkermansia muciniphila (strain ATCC BAA-835 / DSM 22959 / JCM 33894 / BCRC 81048 / CCUG 64013 / CIP 107961 / Muc).